A 265-amino-acid chain; its full sequence is GTP cyclohydrolase FolE2 (265 aa).

Belongs to the GTP cyclohydrolase IV family.

It carries out the reaction GTP + H2O = 7,8-dihydroneopterin 3'-triphosphate + formate + H(+). Its pathway is cofactor biosynthesis; 7,8-dihydroneopterin triphosphate biosynthesis; 7,8-dihydroneopterin triphosphate from GTP: step 1/1. Its function is as follows. Converts GTP to 7,8-dihydroneopterin triphosphate. The polypeptide is GTP cyclohydrolase FolE2 (Bordetella avium (strain 197N)).